A 324-amino-acid chain; its full sequence is MSGPPPPVALVRTAVRRALRDLPAGSLVLVACSGGPDSLALAGATAFVAPRLGLRAGGVTVDHGLQEGSAERADTVAALLRNLGFDPVERVSVTVGTAGGPEAAARSARYAALEKTADVHQAAAVLLGHTRDDQAETVLLRLARGSGARSLAAMATRTGRYLRPFLDVDRRTVHEAASLMGFEPWSDPHNTDPAYTRSRVRHEALPVLERVLGPGITEALARTATLLRDDADALDAWADQAQQQVGRGPTALDAAGLAGLPRAIRTRLLRRIALAAGCPAGALTAEHVFALDRLVTEWRGQSHVDLPGARRGRRHDGQIIVSAD.

An ATP-binding site is contributed by 33 to 38 (SGGPDS).

This sequence belongs to the tRNA(Ile)-lysidine synthase family.

It is found in the cytoplasm. It carries out the reaction cytidine(34) in tRNA(Ile2) + L-lysine + ATP = lysidine(34) in tRNA(Ile2) + AMP + diphosphate + H(+). Its function is as follows. Ligates lysine onto the cytidine present at position 34 of the AUA codon-specific tRNA(Ile) that contains the anticodon CAU, in an ATP-dependent manner. Cytidine is converted to lysidine, thus changing the amino acid specificity of the tRNA from methionine to isoleucine. In Thermobifida fusca (strain YX), this protein is tRNA(Ile)-lysidine synthase.